The following is a 262-amino-acid chain: Small ribosomal subunit protein uS2 (262 aa).

It belongs to the universal ribosomal protein uS2 family.

The protein is Small ribosomal subunit protein uS2 of Azobacteroides pseudotrichonymphae genomovar. CFP2.